The primary structure comprises 373 residues: Anhydro-N-acetylmuramic acid kinase (373 aa).

12-19 lines the ATP pocket; it reads GTSLDGVD.

Belongs to the anhydro-N-acetylmuramic acid kinase family.

It catalyses the reaction 1,6-anhydro-N-acetyl-beta-muramate + ATP + H2O = N-acetyl-D-muramate 6-phosphate + ADP + H(+). The protein operates within amino-sugar metabolism; 1,6-anhydro-N-acetylmuramate degradation. It participates in cell wall biogenesis; peptidoglycan recycling. Catalyzes the specific phosphorylation of 1,6-anhydro-N-acetylmuramic acid (anhMurNAc) with the simultaneous cleavage of the 1,6-anhydro ring, generating MurNAc-6-P. Is required for the utilization of anhMurNAc either imported from the medium or derived from its own cell wall murein, and thus plays a role in cell wall recycling. This Salmonella dublin (strain CT_02021853) protein is Anhydro-N-acetylmuramic acid kinase.